A 426-amino-acid polypeptide reads, in one-letter code: Glutamate-1-semialdehyde 2,1-aminomutase (426 aa).

Lys265 is subject to N6-(pyridoxal phosphate)lysine.

It belongs to the class-III pyridoxal-phosphate-dependent aminotransferase family. HemL subfamily. As to quaternary structure, homodimer. It depends on pyridoxal 5'-phosphate as a cofactor.

Its subcellular location is the cytoplasm. The catalysed reaction is (S)-4-amino-5-oxopentanoate = 5-aminolevulinate. Its pathway is porphyrin-containing compound metabolism; protoporphyrin-IX biosynthesis; 5-aminolevulinate from L-glutamyl-tRNA(Glu): step 2/2. The protein is Glutamate-1-semialdehyde 2,1-aminomutase of Marinobacter nauticus (strain ATCC 700491 / DSM 11845 / VT8) (Marinobacter aquaeolei).